The primary structure comprises 118 residues: Large ribosomal subunit protein bL19 (118 aa).

The protein belongs to the bacterial ribosomal protein bL19 family.

In terms of biological role, this protein is located at the 30S-50S ribosomal subunit interface and may play a role in the structure and function of the aminoacyl-tRNA binding site. The chain is Large ribosomal subunit protein bL19 from Alcanivorax borkumensis (strain ATCC 700651 / DSM 11573 / NCIMB 13689 / SK2).